Reading from the N-terminus, the 263-residue chain is Taurine import ATP-binding protein TauB (263 aa).

The ABC transporter domain maps to 4–235 (LTAEAISLSF…RYAAGETVRS (232 aa)). 40–47 (GPSGCGKS) contributes to the ATP binding site.

This sequence belongs to the ABC transporter superfamily. Taurine importer (TC 3.A.1.17.1) family. The complex is composed of two ATP-binding proteins (TauB), two transmembrane proteins (TauC) and a solute-binding protein (TauA).

It localises to the cell inner membrane. The enzyme catalyses taurine(out) + ATP + H2O = taurine(in) + ADP + phosphate + H(+). Functionally, part of the ABC transporter complex TauABC involved in taurine import. Responsible for energy coupling to the transport system. This is Taurine import ATP-binding protein TauB from Pseudomonas aeruginosa (strain UCBPP-PA14).